A 31-amino-acid chain; its full sequence is Cytochrome b6-f complex subunit 6 (31 aa).

Residues 3-23 (TITSYFGFLLAALTITPALFI) traverse the membrane as a helical segment.

The protein belongs to the PetL family. The 4 large subunits of the cytochrome b6-f complex are cytochrome b6, subunit IV (17 kDa polypeptide, PetD), cytochrome f and the Rieske protein, while the 4 small subunits are PetG, PetL, PetM and PetN. The complex functions as a dimer.

It is found in the plastid. It localises to the chloroplast thylakoid membrane. In terms of biological role, component of the cytochrome b6-f complex, which mediates electron transfer between photosystem II (PSII) and photosystem I (PSI), cyclic electron flow around PSI, and state transitions. PetL is important for photoautotrophic growth as well as for electron transfer efficiency and stability of the cytochrome b6-f complex. The chain is Cytochrome b6-f complex subunit 6 from Zea mays (Maize).